The sequence spans 552 residues: Chaperonin GroEL (552 aa).

Residues Thr-30–Pro-33, Lys-51, Asp-87–Thr-91, Gly-415, Asn-479–Ala-481, and Asp-495 contribute to the ATP site.

The protein belongs to the chaperonin (HSP60) family. Forms a cylinder of 14 subunits composed of two heptameric rings stacked back-to-back. Interacts with the co-chaperonin GroES.

The protein localises to the cytoplasm. It carries out the reaction ATP + H2O + a folded polypeptide = ADP + phosphate + an unfolded polypeptide.. Together with its co-chaperonin GroES, plays an essential role in assisting protein folding. The GroEL-GroES system forms a nano-cage that allows encapsulation of the non-native substrate proteins and provides a physical environment optimized to promote and accelerate protein folding. The protein is Chaperonin GroEL of Nitrosospira multiformis (strain ATCC 25196 / NCIMB 11849 / C 71).